The sequence spans 77 residues: MRGCTLLLFSEAPFLREQEVAVITAYRNVFIQDDPGMHFRWVIRNAEGQRRWRCRNSEPDAGKVLNTRLASDGPLRQ.

This sequence belongs to the UPF0401 family.

The chain is UPF0401 protein c0279 from Escherichia coli O6:H1 (strain CFT073 / ATCC 700928 / UPEC).